We begin with the raw amino-acid sequence, 117 residues long: MPRVKRGFKARRRRNKVLKLAKGYRGARSKLFRSATEAVDRALNYAFRDRKVKKRDFRALWITRINAASRLNGLSYSKLIHGLKKASVEIDRKVLADLAVSDPQGFSEIASVAKTQI.

Belongs to the bacterial ribosomal protein bL20 family.

Binds directly to 23S ribosomal RNA and is necessary for the in vitro assembly process of the 50S ribosomal subunit. It is not involved in the protein synthesizing functions of that subunit. The sequence is that of Large ribosomal subunit protein bL20 from Geobacter metallireducens (strain ATCC 53774 / DSM 7210 / GS-15).